The primary structure comprises 292 residues: Phosphatidylglycerol--prolipoprotein diacylglyceryl transferase (292 aa).

Helical transmembrane passes span 7–27 (IILS…FLRE), 45–65 (FQLR…YVLA), 83–103 (LFWG…IFNW), and 116–136 (IWHG…MIFI). A 1,2-diacyl-sn-glycero-3-phospho-(1'-sn-glycerol) is bound at residue R165. The next 2 membrane-spanning stretches (helical) occupy residues 204 to 224 (PTFL…YFFV) and 264 to 284 (AAQV…AYII).

The protein belongs to the Lgt family.

The protein resides in the cell inner membrane. It catalyses the reaction L-cysteinyl-[prolipoprotein] + a 1,2-diacyl-sn-glycero-3-phospho-(1'-sn-glycerol) = an S-1,2-diacyl-sn-glyceryl-L-cysteinyl-[prolipoprotein] + sn-glycerol 1-phosphate + H(+). It functions in the pathway protein modification; lipoprotein biosynthesis (diacylglyceryl transfer). Catalyzes the transfer of the diacylglyceryl group from phosphatidylglycerol to the sulfhydryl group of the N-terminal cysteine of a prolipoprotein, the first step in the formation of mature lipoproteins. The polypeptide is Phosphatidylglycerol--prolipoprotein diacylglyceryl transferase (Fervidobacterium nodosum (strain ATCC 35602 / DSM 5306 / Rt17-B1)).